A 293-amino-acid polypeptide reads, in one-letter code: Elongation factor Ts (293 aa).

Residues 80–83 (TDFV) form an involved in Mg(2+) ion dislocation from EF-Tu region.

It belongs to the EF-Ts family.

It is found in the cytoplasm. Associates with the EF-Tu.GDP complex and induces the exchange of GDP to GTP. It remains bound to the aminoacyl-tRNA.EF-Tu.GTP complex up to the GTP hydrolysis stage on the ribosome. The sequence is that of Elongation factor Ts from Paraburkholderia phymatum (strain DSM 17167 / CIP 108236 / LMG 21445 / STM815) (Burkholderia phymatum).